Here is a 145-residue protein sequence, read N- to C-terminus: 3-hydroxyacyl-[acyl-carrier-protein] dehydratase FabZ (145 aa).

Histidine 51 is an active-site residue.

This sequence belongs to the thioester dehydratase family. FabZ subfamily.

Its subcellular location is the cytoplasm. The catalysed reaction is a (3R)-hydroxyacyl-[ACP] = a (2E)-enoyl-[ACP] + H2O. In terms of biological role, involved in unsaturated fatty acids biosynthesis. Catalyzes the dehydration of short chain beta-hydroxyacyl-ACPs and long chain saturated and unsaturated beta-hydroxyacyl-ACPs. The chain is 3-hydroxyacyl-[acyl-carrier-protein] dehydratase FabZ from Staphylococcus saprophyticus subsp. saprophyticus (strain ATCC 15305 / DSM 20229 / NCIMB 8711 / NCTC 7292 / S-41).